Reading from the N-terminus, the 365-residue chain is Class E basic helix-loop-helix protein 22 (365 aa).

3 disordered regions span residues 34-93, 134-156, and 188-225; these read AFRS…GGGG, GRGSVAESSGGEQSPDDDSDGRC, and HLHGGAGLPPGGSTGSGGGGSGGGGGGGSSSKKSKEQK. The segment covering 82–93 has biased composition (gly residues); the sequence is GGGGAGGGGGGG. Over residues 191–216 the composition is skewed to gly residues; the sequence is GGAGLPPGGSTGSGGGGSGGGGGGGS. Residues 226–280 enclose the bHLH domain; that stretch reads ALRLNINARERRRMHDLNDALDELRAVIPYAHSPSVRKLSKIATLLLAKNYILMQ.

In terms of assembly, heterodimer with other bHLH proteins, like TCF3/E47. In terms of tissue distribution, kidney, lung, brain and pancreas (insulinoma).

It is found in the nucleus. Its function is as follows. Inhibits DNA binding of TCF3/E47 homodimers and TCF3 (E47)/NEUROD1 heterodimers and acts as a strong repressor of Neurod1 and Myod-responsive genes, probably by heterodimerization with class a basic helix-loop-helix factors. Despite the presence of an intact basic domain, does not bind to DNA. The protein is Class E basic helix-loop-helix protein 22 (BHLHE22) of Mesocricetus auratus (Golden hamster).